The chain runs to 313 residues: tRNA dimethylallyltransferase (313 aa).

ATP is bound at residue 9–16 (GPTATGKS). 11–16 (TATGKS) provides a ligand contact to substrate.

The protein belongs to the IPP transferase family. In terms of assembly, monomer. It depends on Mg(2+) as a cofactor.

The catalysed reaction is adenosine(37) in tRNA + dimethylallyl diphosphate = N(6)-dimethylallyladenosine(37) in tRNA + diphosphate. Its function is as follows. Catalyzes the transfer of a dimethylallyl group onto the adenine at position 37 in tRNAs that read codons beginning with uridine, leading to the formation of N6-(dimethylallyl)adenosine (i(6)A). This Mycobacteroides abscessus (strain ATCC 19977 / DSM 44196 / CCUG 20993 / CIP 104536 / JCM 13569 / NCTC 13031 / TMC 1543 / L948) (Mycobacterium abscessus) protein is tRNA dimethylallyltransferase.